The primary structure comprises 583 residues: Proteasome-associated ATPase (583 aa).

The span at methionine 1 to asparagine 19 shows a compositional bias: polar residues. Residues methionine 1–serine 22 form a disordered region. Residues alanine 24–glutamine 75 are a coiled coil. Glycine 271–leucine 276 serves as a coordination point for ATP. The tract at residues tyrosine 582–leucine 583 is docks into pockets in the proteasome alpha-ring.

This sequence belongs to the AAA ATPase family. Homohexamer. Assembles into a hexameric ring structure that caps the 20S proteasome core. Strongly interacts with the prokaryotic ubiquitin-like protein Pup through a hydrophobic interface; the interacting region of ARC lies in its N-terminal coiled-coil domain. There is one Pup binding site per ARC hexamer ring. Upon ATP-binding, the C-terminus of ARC interacts with the alpha-rings of the proteasome core, possibly by binding to the intersubunit pockets.

The protein operates within protein degradation; proteasomal Pup-dependent pathway. In terms of biological role, ATPase which is responsible for recognizing, binding, unfolding and translocation of pupylated proteins into the bacterial 20S proteasome core particle. May be essential for opening the gate of the 20S proteasome via an interaction with its C-terminus, thereby allowing substrate entry and access to the site of proteolysis. Thus, the C-termini of the proteasomal ATPase may function like a 'key in a lock' to induce gate opening and therefore regulate proteolysis. The polypeptide is Proteasome-associated ATPase (Pseudarthrobacter chlorophenolicus (strain ATCC 700700 / DSM 12829 / CIP 107037 / JCM 12360 / KCTC 9906 / NCIMB 13794 / A6) (Arthrobacter chlorophenolicus)).